A 222-amino-acid chain; its full sequence is Probable GTP-binding protein EngB (222 aa).

The 175-residue stretch at 25 to 199 (AGVEVAFAGR…SQLLQNWFDT (175 aa)) folds into the EngB-type G domain. Residues 33–40 (GRSNAGKS), 60–64 (GRTQH), 78–81 (DLPG), 145–148 (TKAD), and 178–180 (FSS) contribute to the GTP site. Mg(2+) contacts are provided by serine 40 and threonine 62.

Belongs to the TRAFAC class TrmE-Era-EngA-EngB-Septin-like GTPase superfamily. EngB GTPase family. Mg(2+) serves as cofactor.

Necessary for normal cell division and for the maintenance of normal septation. This is Probable GTP-binding protein EngB from Nitrosomonas europaea (strain ATCC 19718 / CIP 103999 / KCTC 2705 / NBRC 14298).